The chain runs to 272 residues: Formamidopyrimidine-DNA glycosylase (272 aa).

Pro-2 (schiff-base intermediate with DNA) is an active-site residue. Glu-3 acts as the Proton donor in catalysis. Lys-58 (proton donor; for beta-elimination activity) is an active-site residue. Positions 92, 111, and 153 each coordinate DNA. Residues 238–272 (AVYGRQGQSCPRCGGLVERCRLGQRSTFFCPACQR) form an FPG-type zinc finger. The active-site Proton donor; for delta-elimination activity is Arg-262.

This sequence belongs to the FPG family. As to quaternary structure, monomer. Requires Zn(2+) as cofactor.

It carries out the reaction Hydrolysis of DNA containing ring-opened 7-methylguanine residues, releasing 2,6-diamino-4-hydroxy-5-(N-methyl)formamidopyrimidine.. The catalysed reaction is 2'-deoxyribonucleotide-(2'-deoxyribose 5'-phosphate)-2'-deoxyribonucleotide-DNA = a 3'-end 2'-deoxyribonucleotide-(2,3-dehydro-2,3-deoxyribose 5'-phosphate)-DNA + a 5'-end 5'-phospho-2'-deoxyribonucleoside-DNA + H(+). Functionally, involved in base excision repair of DNA damaged by oxidation or by mutagenic agents. Acts as a DNA glycosylase that recognizes and removes damaged bases. Has a preference for oxidized purines, such as 7,8-dihydro-8-oxoguanine (8-oxoG). Has AP (apurinic/apyrimidinic) lyase activity and introduces nicks in the DNA strand. Cleaves the DNA backbone by beta-delta elimination to generate a single-strand break at the site of the removed base with both 3'- and 5'-phosphates. The sequence is that of Formamidopyrimidine-DNA glycosylase from Laribacter hongkongensis (strain HLHK9).